The chain runs to 511 residues: Peptide transporter YePEPT (511 aa).

Residues 1–19 (MQTSTNTPGGRTFFGHPYP) lie on the Cytoplasmic side of the membrane. A helical membrane pass occupies residues 20 to 45 (LSGLFLSEMWERFSFYGIRPLLILFM). Topologically, residues 46–59 (AATVFDGGMGLPRE) are periplasmic. The chain crosses the membrane as a helical span at residues 60–84 (QASAIVGIFAGSMYLAALPGGLLAD). Residues 85–88 (NWLG) are Cytoplasmic-facing. The helical transmembrane segment at 89 to 109 (QQRAVWYGSILIALGHLSIAL) threads the bilayer. Topologically, residues 110-115 (SAFFGN) are periplasmic. Residues 116 to 138 (DLFFIGLVFIVLGTGLFKTCISV) traverse the membrane as a helical segment. At 139–149 (MVGTLYKPGDA) the chain is on the cytoplasmic side. A helical membrane pass occupies residues 150–175 (RRDGGFSLFYMGINMGSFIAPLLSGW). Residues 176–181 (LLRTHG) lie on the Periplasmic side of the membrane. The chain crosses the membrane as a helical span at residues 182-208 (WHWGFGIGGIGMLVALLIFRGFAIPAM). Over 209–232 (KRYDAEVGLDSSWNKPTNQRQGVG) the chain is Cytoplasmic. The chain crosses the membrane as a helical span at residues 233-253 (RWVTAIMAVVVVIIALISQGV). Over 254 to 256 (IPI) the chain is Periplasmic. A helical membrane pass occupies residues 257-279 (NPVMIASLLVYVIAASVTLYFIY). At 280–294 (LFAFAKMSRKDRARL) the chain is on the cytoplasmic side. A helical membrane pass occupies residues 295–321 (LVCFILLVSAAFFWSAFEQKPTSFNLF). The Periplasmic portion of the chain corresponds to 322-335 (ANDYTDRMVMGFEI). The chain crosses the membrane as a helical span at residues 336–357 (PTVWFQSINALFIILLAPVFSW). At 358–369 (AWPALAKKKIQP) the chain is on the cytoplasmic side. The chain crosses the membrane as a helical span at residues 370–396 (SSITKFVIGILCAAAGFAVMMYAAQHV). The Periplasmic segment spans residues 397-405 (LSSGGAGVS). The chain crosses the membrane as a helical span at residues 406–426 (PLWLVMSILLLTLGELCLSPI). Topologically, residues 427–441 (GLATMTLLAPDRMRG) are cytoplasmic. Residues 442–462 (QVMGLWFCASSLGNLAAGLIG) form a helical membrane-spanning segment. Residues 463–471 (GHVKADQLD) are Periplasmic-facing. The helical transmembrane segment at 472–496 (MLPTLFARCSIALVICAAVLILLIV) threads the bilayer. Topologically, residues 497 to 511 (PIRRLMNNTQGQQTA) are cytoplasmic.

Belongs to the major facilitator superfamily. Proton-dependent oligopeptide transporter (POT/PTR) (TC 2.A.17) family.

Its subcellular location is the cell inner membrane. With respect to regulation, transport is inhibited by the proton ionophore carbonyl cyanide m-chlorophenylhydrazone (CCCP). Functionally, mediates the proton-dependent uptake of dipeptides. Shows higher affinity for dipeptides with a negatively charged amino acid residue at the N-terminal position, such as Asp-Ala and Glu-Ala. Also displays specificity for Ala-Ala, Ala-Tyr and Tyr-Ala. The sequence is that of Peptide transporter YePEPT from Yersinia enterocolitica subsp. palearctica serotype O:3 (strain YE-P4).